Here is a 607-residue protein sequence, read N- to C-terminus: Probable LRR receptor-like serine/threonine-protein kinase At5g65240 (607 aa).

An N-terminal signal peptide occupies residues 1–24 (MALLIITALVFSSLWSSVSPDAQG). Over 25–219 (DALFALRSSL…SGDSSSRKTG (195 aa)) the chain is Extracellular. Asparagine 74 and asparagine 110 each carry an N-linked (GlcNAc...) asparagine glycan. LRR repeat units lie at residues 87–111 (LTTL…IGNL), 112–135 (SSLT…LGNL), 137–159 (NLQF…LTGL), and 160–183 (SKLI…LFKI). Residues asparagine 149, asparagine 171, asparagine 187, and asparagine 192 are each glycosylated (N-linked (GlcNAc...) asparagine). The helical transmembrane segment at 220–240 (IIAGVVSGIAVILLGFFFFFF) threads the bilayer. The Cytoplasmic segment spans residues 241–607 (CKDKHKGYKR…QDAIELSGGR (367 aa)). Threonine 281 is modified (phosphothreonine). Residues 284-568 (FSEKNVLGQG…EGEGLAERWE (285 aa)) form the Protein kinase domain. 290-298 (LGQGGFGKV) provides a ligand contact to ATP. Threonine 307 carries the phosphothreonine modification. Lysine 312 lines the ATP pocket. Serine 365 is modified (phosphoserine). Aspartate 411 (proton acceptor) is an active-site residue. A phosphothreonine mark is found at threonine 444, threonine 445, and threonine 450. Phosphoserine is present on serine 460. Residue threonine 461 is modified to Phosphothreonine. Serine 465 is modified (phosphoserine). Threonine 541 is subject to Phosphothreonine.

It belongs to the protein kinase superfamily. Ser/Thr protein kinase family.

The protein resides in the cell membrane. The catalysed reaction is L-seryl-[protein] + ATP = O-phospho-L-seryl-[protein] + ADP + H(+). It catalyses the reaction L-threonyl-[protein] + ATP = O-phospho-L-threonyl-[protein] + ADP + H(+). The polypeptide is Probable LRR receptor-like serine/threonine-protein kinase At5g65240 (Arabidopsis thaliana (Mouse-ear cress)).